The chain runs to 862 residues: MLSIAHKIFGSANSRIIKSFYKVVQHINAIEHEFQLLSNEALKNKTIEFKEELKNGKTLDDILVPAFAVVREASKRVLNMRHFDVQLIGGMVLHKGMISEMKTGEGKTLVATLAAYLNALEGKGVHIVTVNDYLAKRDAEWMGELYDALGITVGCILTDTNDLERKNAYQCDILYSTNNNLGFDYLRDNMKFSRSEMVQRGFNYAIVDEVDSILIDEARTPLIISGQVDQDIKMYKKIDNLIYELVEEDYELEEKSKNIFLTEAGTTKIENLLTKHNLIPSNTSLYDIDNIIIMHYIIQALRAHKIFALDKDYIIKNGNIVIIDEFTGRMMDGRRYSDGLHQALEAKEKLNINSENQTLASTTFQNYFRMYTKLSGMTGTAATESEEFLGIYNLQVVQIPTNIPVQRIDLNDDIYCTEEEKFSAVIKFISECHQKLQPVLVGTVSIEKSEMLSKLLTQNKLKHSVLNARYHEQEAYIIAQAGIPGTITIATNMAGRGTDIQLGGNLKMLAKTALANTTDKEAIEIKYKQLSEKVKKDKEIAIQAGGLCVIGTERHESRRIDNQLRGRSGRQGDPGLSKFFLSLEDDLLRIFGSDKIKGVLKKLGMKKDEAIQHTWISRSIEKAQHKVESRNYDIRKSLLKFDNVINEQRKVVFDQRNRILDNDSYDISIIYRDLNSEIVNSIIHDKYYNLDDETYKILSSEFTRIYALTLDYSIISELESKEKVIEYLNKIVDEHFTQKIEEFKSRDQKLWDYAVKKVMIMSLDYLWRDHLAALDSLKCGINLRSIAQKDPLNEFKAEAFSMLENMMNKFYELITQRLSHLRFDIELSETQIPEYNINHTKISRNEKCPCGSGKKFKHCHGM.

Residues Gln86, 104 to 108, and Asp499 contribute to the ATP site; that span reads GEGKT. Residues Cys848, Cys850, Cys859, and His860 each coordinate Zn(2+).

It belongs to the SecA family. In terms of assembly, monomer and homodimer. Part of the essential Sec protein translocation apparatus which comprises SecA, SecYEG and auxiliary proteins SecDF-YajC and YidC. Zn(2+) serves as cofactor.

Its subcellular location is the cell inner membrane. The protein resides in the cytoplasm. The enzyme catalyses ATP + H2O + cellular proteinSide 1 = ADP + phosphate + cellular proteinSide 2.. Part of the Sec protein translocase complex. Interacts with the SecYEG preprotein conducting channel. Has a central role in coupling the hydrolysis of ATP to the transfer of proteins into and across the cell membrane, serving both as a receptor for the preprotein-SecB complex and as an ATP-driven molecular motor driving the stepwise translocation of polypeptide chains across the membrane. The chain is Protein translocase subunit SecA from Ehrlichia canis (strain Jake).